Consider the following 220-residue polypeptide: Protein-L-isoaspartate O-methyltransferase (220 aa).

Ser-65 is an active-site residue.

This sequence belongs to the methyltransferase superfamily. L-isoaspartyl/D-aspartyl protein methyltransferase family.

It localises to the cytoplasm. The catalysed reaction is [protein]-L-isoaspartate + S-adenosyl-L-methionine = [protein]-L-isoaspartate alpha-methyl ester + S-adenosyl-L-homocysteine. In terms of biological role, catalyzes the methyl esterification of L-isoaspartyl residues in peptides and proteins that result from spontaneous decomposition of normal L-aspartyl and L-asparaginyl residues. It plays a role in the repair and/or degradation of damaged proteins. In Pyrococcus horikoshii (strain ATCC 700860 / DSM 12428 / JCM 9974 / NBRC 100139 / OT-3), this protein is Protein-L-isoaspartate O-methyltransferase (pcm).